The sequence spans 309 residues: Dicarboxylate carrier UCP2 (309 aa).

Residues 1–16 (MVGFKATDVPPTATVK) are Mitochondrial intermembrane-facing. Solcar repeat units lie at residues 11–106 (PTAT…VKQF), 114–203 (AGIG…IKDT), and 212–297 (DDLP…LKRA). An important for interaction with long-chain fatty acids region spans residues 16-63 (KFLGAGTAACIADLITFPLDTAKVRLQIQGESQGLVRTAASAQYRGVL). Residues 17–40 (FLGAGTAACIADLITFPLDTAKVR) traverse the membrane as a helical segment. The Mitochondrial matrix segment spans residues 41 to 77 (LQIQGESQGLVRTAASAQYRGVLGTILTMVRTEGPRS). A helical membrane pass occupies residues 78-103 (LYNGLVAGLQRQMSFASVRIGLYDSV). At 104–119 (KQFYTKGSEHAGIGSR) the chain is on the mitochondrial intermembrane side. The chain crosses the membrane as a helical span at residues 120–145 (LLAGSTTGALAVAVAQPTDVVKVRFQ). Residues 146–173 (AQARAGGGRRYQSTVEAYKTIAREEGIR) lie on the Mitochondrial matrix side of the membrane. A helical membrane pass occupies residues 174-199 (GLWKGTSPNVARNAIVNCAELVTYDL). The Mitochondrial intermembrane segment spans residues 200 to 217 (IKDTLLKANLMTDDLPCH). The helical transmembrane segment at 218-242 (FTSAFGAGFCTTVIASPVDVVKTRY) threads the bilayer. Residues 243-268 (MNSALGQYHSAGHCALTMLRKEGPRA) lie on the Mitochondrial matrix side of the membrane. A helical membrane pass occupies residues 269–294 (FYKGFMPSFLRLGSWNVVMFVTYEQL). The segment at 278–285 (LRLGSWNV) is important for interaction with long-chain fatty acids. The Mitochondrial intermembrane portion of the chain corresponds to 295–309 (KRALMAAYQSREAPF).

Belongs to the mitochondrial carrier (TC 2.A.29) family. In terms of assembly, homotetramer. Adopts an asymmetrical dimer of dimers functional form. Interacts with MICU1 (when methylated); leading to decrease the calcium sensitivity of MICU1. Widely expressed. Highest in spleen, lung, white and brown adipose tissues. 4-6 times higher levels are detected in white adipose tissue of ob/ob and db/db mice when compared to lean littermates. Expressed in neurons of the ventromedial nucleus of the hypothalamus (at protein level). Expressed in thymocytes (at protein level).

The protein resides in the mitochondrion inner membrane. It catalyses the reaction L-aspartate(out) + phosphate(in) + H(+)(in) = L-aspartate(in) + phosphate(out) + H(+)(out). The enzyme catalyses oxaloacetate(out) + phosphate(in) + H(+)(in) = oxaloacetate(in) + phosphate(out) + H(+)(out). The catalysed reaction is (S)-malate(out) + phosphate(in) + H(+)(in) = (S)-malate(in) + phosphate(out) + H(+)(out). It carries out the reaction malonate(out) + phosphate(in) + H(+)(in) = malonate(in) + phosphate(out) + H(+)(out). It catalyses the reaction sulfate(out) + phosphate(in) + H(+)(in) = sulfate(in) + phosphate(out) + H(+)(out). The enzyme catalyses (S)-malate(out) = (S)-malate(in). The catalysed reaction is L-aspartate(out) = L-aspartate(in). It carries out the reaction phosphate(in) = phosphate(out). It catalyses the reaction chloride(in) = chloride(out). The enzyme catalyses H(+)(in) = H(+)(out). The catalysed reaction is a long-chain fatty acid(out) = a long-chain fatty acid(in). With respect to regulation, proton conductance is activated by free long-chain fatty acids and allosterically inhibited by purine nucleotides. Could be constitutively inhibited by GDP. Functionally, antiporter that exports dicarboxylate intermediates of the Krebs cycle in exchange for phosphate plus a proton across the inner membrane of mitochondria, a process driven by mitochondrial motive force with an overall impact on glycolysis, glutaminolysis and glutathione-dependent redox balance. Continuous export of oxaloacetate and related four-carbon dicarboxylates from mitochondrial matrix into the cytosol negatively regulates the oxidation of acetyl-CoA substrates via the Krebs cycle lowering the ATP/ADP ratio and reactive oxygen species (ROS) production. May mediate inducible proton entry into the mitochondrial matrix affecting ATP turnover as a protection mechanism against oxidative stress. The proton currents are most likely associated with fatty acid flipping across the inner membrane of mitochondria in a metabolic process regulated by free fatty acids and purine nucleotides. Regulates the use of glucose as a source of energy. Required for glucose-induced DRP1-dependent mitochondrial fission and neuron activation in the ventromedial nucleus of the hypothalamus (VMH). This mitochondrial adaptation mechanism modulates the VMH pool of glucose-excited neurons with an impact on systemic glucose homeostasis. Regulates ROS levels and metabolic reprogramming of macrophages during the resolution phase of inflammation. Attenuates ROS production in response to IL33 to preserve the integrity of the Krebs cycle required for persistent production of itaconate and subsequent GATA3-dependent differentiation of inflammation-resolving alternatively activated macrophages. Can unidirectionally transport anions including L-malate, L-aspartate, phosphate and chloride ions. Does not mediate adaptive thermogenesis. The polypeptide is Dicarboxylate carrier UCP2 (Ucp2) (Mus musculus (Mouse)).